The following is a 187-amino-acid chain: Potassium-transporting ATPase KdpC subunit (187 aa).

A helical transmembrane segment spans residues 11-31; it reads LILLMTVVTGALYPLAVTGIA.

This sequence belongs to the KdpC family. In terms of assembly, the system is composed of three essential subunits: KdpA, KdpB and KdpC.

It localises to the cell inner membrane. Part of the high-affinity ATP-driven potassium transport (or Kdp) system, which catalyzes the hydrolysis of ATP coupled with the electrogenic transport of potassium into the cytoplasm. This subunit acts as a catalytic chaperone that increases the ATP-binding affinity of the ATP-hydrolyzing subunit KdpB by the formation of a transient KdpB/KdpC/ATP ternary complex. In Pseudomonas entomophila (strain L48), this protein is Potassium-transporting ATPase KdpC subunit.